A 178-amino-acid polypeptide reads, in one-letter code: Large ribosomal subunit protein uL6c (178 aa).

It belongs to the universal ribosomal protein uL6 family. Part of the 50S ribosomal subunit.

It is found in the plastid. Its subcellular location is the chloroplast. Its function is as follows. Binds 23S rRNA. This chain is Large ribosomal subunit protein uL6c (rpl6), found in Phaeodactylum tricornutum (strain CCAP 1055/1).